A 457-amino-acid polypeptide reads, in one-letter code: Cystathionine beta-lyase (457 aa).

Residues 1 to 41 (MSTPNSDSPAAQAAKKVFSRLDLDGHNLPPSPAPSSPHNGR) are disordered.

This sequence belongs to the trans-sulfuration enzymes family. Requires pyridoxal 5'-phosphate as cofactor.

It is found in the cytoplasm. The protein localises to the nucleus. It carries out the reaction L,L-cystathionine + H2O = L-homocysteine + pyruvate + NH4(+). It catalyses the reaction an S-substituted L-cysteine + H2O = a thiol + pyruvate + NH4(+). It participates in amino-acid biosynthesis; L-methionine biosynthesis via de novo pathway; L-homocysteine from L-cystathionine: step 1/1. Its function is as follows. Involved in de novo synthesis of methionine. The polypeptide is Cystathionine beta-lyase (met-2) (Neurospora crassa (strain ATCC 24698 / 74-OR23-1A / CBS 708.71 / DSM 1257 / FGSC 987)).